An 89-amino-acid chain; its full sequence is Neuropeptide S (89 aa).

The N-terminal stretch at 1–23 (MIGSLKLSFVLALSLSVMHVLWC) is a signal peptide. Residues 24–69 (YPVLSSKVPGKPDYFLILLSSCPARLEGSDRLAFLKPILEKTSMKR) constitute a propeptide that is removed on maturation.

The protein localises to the secreted. Functionally, may play an important anorexigenic role. Modulates arousal and anxiety as well as increases locomotor activity. Binds to its receptor NPSR1 with nanomolar affinity to increase intracellular calcium concentrations. The sequence is that of Neuropeptide S (Nps) from Mus musculus (Mouse).